Consider the following 122-residue polypeptide: UPF0102 protein Gmet_2864 (122 aa).

It belongs to the UPF0102 family.

This is UPF0102 protein Gmet_2864 from Geobacter metallireducens (strain ATCC 53774 / DSM 7210 / GS-15).